The chain runs to 887 residues: Centrobin (887 aa).

The segment at 1–34 (MATAAPSPSSPLRPEDLLSDSSEPPGLNQVSSEV) is disordered. Position 81 is a phosphoserine (S81). 4 disordered regions span residues 110–153 (MLHT…PSSS), 465–486 (SLRQ…LSGQ), 566–591 (TLLP…EKGE), and 636–695 (LGPP…LPPA). A compositionally biased stretch (basic and acidic residues) spans 113–128 (TSRDTAYRTGSERREE). The segment covering 133-153 (SDSTATLLNTRPLQDLSPSSS) has biased composition (polar residues). Residues 191-557 (RRKHCERHIQ…LQAMLQAHWE (367 aa)) adopt a coiled-coil conformation. The tract at residues 360-887 (QEHQLKERLQ…SMRSRGGIWR (528 aa)) is required for centrosome localization. Residues 670–680 (TDDHRAERPFP) are compositionally biased toward basic and acidic residues. S782 bears the Phosphoserine mark. The interval 824 to 887 (GTDGQGELVP…SMRSRGGIWR (64 aa)) is disordered. The span at 832–849 (VPRRNTDSRLGETTRKEI) shows a compositional bias: basic and acidic residues.

Interacts with LYST.

It localises to the cytoplasm. Its subcellular location is the cytoskeleton. It is found in the microtubule organizing center. The protein resides in the centrosome. The protein localises to the centriole. Required for centriole duplication. Inhibition of centriole duplication leading to defects in cytokinesis. This chain is Centrobin (Cntrob), found in Mus musculus (Mouse).